Here is a 278-residue protein sequence, read N- to C-terminus: TATA box-binding protein-associated factor RNA polymerase I subunit D (278 aa).

Disordered regions lie at residues 19–71 (LANR…SSFE) and 88–115 (KKRY…RRNP). Ser23 bears the Phosphoserine mark. Basic residues-rich tracts occupy residues 43 to 53 (REKRNPIRKFV) and 88 to 99 (KKRYKKKKKKRY). Ser138 and Ser234 each carry phosphoserine.

As to quaternary structure, component of the transcription factor SL1/TIF-IB complex, composed of TBP and at least TAF1A, TAF1B, TAF1C and TAF1D. Interacts with UBTF.

The protein resides in the nucleus. Component of the transcription factor SL1/TIF-IB complex, which is involved in the assembly of the PIC (preinitiation complex) during RNA polymerase I-dependent transcription. The rate of PIC formation probably is primarily dependent on the rate of association of SL1/TIF-IB with the rDNA promoter. SL1/TIF-IB is involved in stabilization of nucleolar transcription factor 1/UBTF on rDNA. Formation of SL1/TIF-IB excludes the association of TBP with TFIID subunits. This chain is TATA box-binding protein-associated factor RNA polymerase I subunit D (TAF1D), found in Pongo abelii (Sumatran orangutan).